The primary structure comprises 443 residues: KH domain-containing, RNA-binding, signal transduction-associated protein 1 (443 aa).

A disordered region spans residues 1 to 94 (MQRRDDPASR…PLLPPSATAA (94 aa)). Ser-18 and Ser-20 each carry phosphoserine. An N6-acetyllysine modification is found at Lys-21. The residue at position 29 (Ser-29) is a Phosphoserine. Thr-33 bears the Phosphothreonine mark. Arg-45 and Arg-52 each carry asymmetric dimethylarginine; by PRMT1. Phosphoserine; by MAPK1 is present on Ser-58. Residues 61-72 (TQPPPLLPPSTP) are compositionally biased toward pro residues. Thr-71 and Thr-84 each carry phosphothreonine; by MAPK1. Residues 81–94 (SAPTPLLPPSATAA) are compositionally biased toward low complexity. Glycyl lysine isopeptide (Lys-Gly) (interchain with G-Cter in SUMO2) cross-links involve residues Lys-96 and Lys-102. Residues 100-260 (ENKYLPELMA…VKKFLVPDMM (161 aa)) form an involved in homodimerization region. At Ser-113 the chain carries Phosphoserine. Lys-139 participates in a covalent cross-link: Glycyl lysine isopeptide (Lys-Gly) (interchain with G-Cter in SUMO2). Residue Ser-150 is modified to Phosphoserine. The KH domain occupies 171 to 197 (NFVGKILGPQGNTIKRLQEETGAKISV). An N6-acetyllysine; alternate modification is found at Lys-175. Lys-175 participates in a covalent cross-link: Glycyl lysine isopeptide (Lys-Gly) (interchain with G-Cter in SUMO2); alternate. Thr-183 carries the phosphothreonine modification. The tract at residues 280–317 (PSRGRGVSVRGRGAAPPPPPVPRGRGVGPPRGALVRGT) is disordered. Residues Arg-282, Arg-284, and Arg-291 each carry the omega-N-methylarginine modification. Over residues 283–293 (GRGVSVRGRGA) the composition is skewed to low complexity. An Asymmetric dimethylarginine modification is found at Arg-304. Low complexity predominate over residues 307 to 316 (GPPRGALVRG). Arg-310 and Arg-315 each carry omega-N-methylarginine; by PRMT1. At Arg-320 the chain carries Dimethylated arginine; alternate. Position 320 is an omega-N-methylarginine; by PRMT1; alternate (Arg-320). Arg-325 is subject to Omega-N-methylarginine; by PRMT1. Residues 326-345 (GATVTRGVPPPPTVRGAPTP) form a disordered region. Arg-331 and Arg-340 each carry dimethylated arginine; alternate. Omega-N-methylarginine; by PRMT1; alternate is present on residues Arg-331 and Arg-340. Arg-331 bears the Asymmetric dimethylarginine; alternate mark. Positions 351 to 443 (GIQRIPLPPT…AYREHPYGRY (93 aa)) are interaction with HNRNPA1. The residue at position 387 (Tyr-387) is a Phosphotyrosine. Ser-390 is subject to Phosphoserine. The tract at residues 400-420 (GHGELQDSYEAYGQDDWNGTR) is interaction with ZBTB7A. Positions 411–443 (YGQDDWNGTRPSLKAPPARPVKGAYREHPYGRY) are disordered. Residue Lys-432 forms a Glycyl lysine isopeptide (Lys-Gly) (interchain with G-Cter in SUMO2) linkage. The segment covering 434–443 (AYREHPYGRY) has biased composition (basic and acidic residues). A phosphotyrosine; by PTK6 mark is found at Tyr-435, Tyr-440, and Tyr-443.

It belongs to the KHDRBS family. As to quaternary structure, self-associates to form homooligomers when bound to RNA, oligomerization appears to be limited when binding to proteins. Forms a trimeric complex in the nucleus consisting of BANP, HDAC6 and KHDRBS1/SAM68; HDAC6 keeps KHDRBS1 in a deacetylated state which inhibits the inclusion of CD44 alternate exons. The complex is disrupted by MAPK1/MAPK3-mediated phosphorylation of BANP which results in BANP export to the cytoplasm. This facilitates acetylation of KHDRBS1 and CD44 variant exon inclusion. Interacts with KHDRBS3/SLIM-2 and KHDRBS2/SLIM-1; heterooligomer formation of KHDRBS family proteins may modulate RNA substrate specificity. Interacts with RASA1, FYN, GRB2, PLCG1, SRC, CBP and PRMT1. Interacts with PTK6 (via SH3 and SH2 domains). Forms a complex with ILF2, ILF3, YLPM1, RBMX, NCOA5 and PPP1CA. Binds WBP4/FBP21 (via WW domains), FNBP4/FBP30 (via WW domains). Interacts (via Arg/Gly-rich-flanked Pro-rich regions) with FYN (via the SH3 domain). Interacts with APC, HNRNPA1. Interacts with the non-receptor tyrosine kinase SRMS; the interaction leads to phosphorylation of KHDRBS1. Interacts with ZBTB7A; negatively regulates KHDRBS1 splicing activity toward BCL2L1. In terms of processing, tyrosine phosphorylated by several non-receptor tyrosine kinases including LCK, FYN and JAK3. Also tyrosine phosphorylated by the non-receptor tyrosine kinase SRMS in an EGF-dependent manner. Phosphorylation by PTK6 negatively regulates its RNA binding ability. Phosphorylation by PTK6 at Tyr-440 dictates the nuclear localization of KHDRBS1. Phosphorylation by MAPK1 at Ser-58, Thr-71 and Thr-84 regulates CD44 alternative splicing by promoting CD44 exon v5 inclusion. Acetylated. Positively correlates with ability to bind RNA. Deacetylated by HDAC6; this regulates alternative splicing by inhibiting the inclusion of CD44 alternate exons. Post-translationally, arginine methylation is required for nuclear localization. Inhibits interaction with Src-like SH3 domains, but not interaction with WW domains of WBP4/FBP21 and FNBP4/FBP30. In terms of tissue distribution, in adult cerebellum expressed in most neuronal cell populations, specifically in cerebellar granule cells of the internal granular layer, ROR(alpha)-positive Purkinje cells, internal granular layer and molecular layer interneurons (at protein level).

It localises to the nucleus. The protein localises to the cytoplasm. Its subcellular location is the membrane. In terms of biological role, recruited and tyrosine phosphorylated by several receptor systems, for example the T-cell, leptin and insulin receptors. Once phosphorylated, functions as an adapter protein in signal transduction cascades by binding to SH2 and SH3 domain-containing proteins. Role in G2-M progression in the cell cycle. Represses CBP-dependent transcriptional activation apparently by competing with other nuclear factors for binding to CBP. Also acts as a putative regulator of mRNA stability and/or translation rates and mediates mRNA nuclear export. Positively regulates the association of constitutive transport element (CTE)-containing mRNA with large polyribosomes and translation initiation. May not be involved in the nucleocytoplasmic export of unspliced (CTE)-containing RNA species. RNA-binding protein that plays a role in the regulation of alternative splicing and influences mRNA splice site selection and exon inclusion. Binds to RNA containing 5'-[AU]UAA-3' as a bipartite motif spaced by more than 15 nucleotides. Binds poly(A). In cooperation with HNRNPA1 modulates alternative splicing of BCL2L1 by promoting splicing toward isoform Bcl-X(S), and of SMN1. Can regulate CD44 alternative splicing in a Ras pathway-dependent manner. Can regulate alternative splicing of NRXN1 and NRXN3 in the laminin G-like domain 6 containing the evolutionary conserved neurexin alternative spliced segment 4 (AS4) involved in neurexin selective targeting to postsynaptic partners. In a neuronal activity-dependent manner cooperates synergistically with KHDRBS2/SLIM-1 in regulation of NRXN1 exon skipping at AS4. The cooperation with KHDRBS2/SLIM-1 is antagonistic for regulation of NXRN3 alternative splicing at AS4. The sequence is that of KH domain-containing, RNA-binding, signal transduction-associated protein 1 from Mus musculus (Mouse).